The primary structure comprises 313 residues: MADPAFVPLRPIAIKDRSSIVFLQRGQLDVVDGAFVLIDQEGVRVQIPVGGLACLMLEPGTRITHAAIVLCARVGCLVIWVGERGTRLYAAGQPGGARADRLLFQARNALDETARLNVVREMYRRRFDDDPPARRSVDQLRGMEGVRVREIYRLLAKKYAVDWNARRYDHNDWDGADIPNRCLSAATACLYGLCEAAILAAGYAPAIGFLHRGKPQSFVYDVADLYKVETVVPTAFSIAAKIAAGKGDDSPPERQVRIACRDQFRKSGLLEKIIPDIEEILRAGGLEPPLDAPEAVDPVIPPEEPSGDDGHRG.

Mn(2+) is bound by residues Glu-144, His-211, and Asp-224. The segment at 288 to 313 (PPLDAPEAVDPVIPPEEPSGDDGHRG) is disordered.

Belongs to the CRISPR-associated endonuclease Cas1 family. Homodimer, forms a heterotetramer with a Cas2 homodimer. Mg(2+) is required as a cofactor. The cofactor is Mn(2+).

CRISPR (clustered regularly interspaced short palindromic repeat), is an adaptive immune system that provides protection against mobile genetic elements (viruses, transposable elements and conjugative plasmids). CRISPR clusters contain spacers, sequences complementary to antecedent mobile elements, and target invading nucleic acids. CRISPR clusters are transcribed and processed into CRISPR RNA (crRNA). Acts as a dsDNA endonuclease. Involved in the integration of spacer DNA into the CRISPR cassette. This chain is CRISPR-associated endonuclease Cas1 1, found in Rhodospirillum rubrum (strain ATCC 11170 / ATH 1.1.1 / DSM 467 / LMG 4362 / NCIMB 8255 / S1).